Reading from the N-terminus, the 406-residue chain is Glucose-1-phosphate adenylyltransferase (406 aa).

Alpha-D-glucose 1-phosphate contacts are provided by residues tyrosine 100, glycine 165, 181–182, and serine 199; that span reads EK.

This sequence belongs to the bacterial/plant glucose-1-phosphate adenylyltransferase family. Homotetramer.

It carries out the reaction alpha-D-glucose 1-phosphate + ATP + H(+) = ADP-alpha-D-glucose + diphosphate. The protein operates within glycan biosynthesis; glycogen biosynthesis. Its function is as follows. Involved in the biosynthesis of ADP-glucose, a building block required for the elongation reactions to produce glycogen. Catalyzes the reaction between ATP and alpha-D-glucose 1-phosphate (G1P) to produce pyrophosphate and ADP-Glc. The protein is Glucose-1-phosphate adenylyltransferase of Streptomyces avermitilis (strain ATCC 31267 / DSM 46492 / JCM 5070 / NBRC 14893 / NCIMB 12804 / NRRL 8165 / MA-4680).